An 874-amino-acid chain; its full sequence is Alanine--tRNA ligase (874 aa).

4 residues coordinate Zn(2+): H562, H566, C664, and H668.

Belongs to the class-II aminoacyl-tRNA synthetase family. It depends on Zn(2+) as a cofactor.

Its subcellular location is the cytoplasm. The catalysed reaction is tRNA(Ala) + L-alanine + ATP = L-alanyl-tRNA(Ala) + AMP + diphosphate. Its function is as follows. Catalyzes the attachment of alanine to tRNA(Ala) in a two-step reaction: alanine is first activated by ATP to form Ala-AMP and then transferred to the acceptor end of tRNA(Ala). Also edits incorrectly charged Ser-tRNA(Ala) and Gly-tRNA(Ala) via its editing domain. In Neisseria meningitidis serogroup B (strain ATCC BAA-335 / MC58), this protein is Alanine--tRNA ligase.